The primary structure comprises 838 residues: Protein translocase subunit SecA (838 aa).

ATP-binding positions include Gln85, 103 to 107, and Asp493; that span reads GEGKT. Positions 823, 825, 834, and 835 each coordinate Zn(2+).

It belongs to the SecA family. As to quaternary structure, monomer and homodimer. Part of the essential Sec protein translocation apparatus which comprises SecA, SecYEG and auxiliary proteins SecDF. Other proteins may also be involved. Zn(2+) serves as cofactor.

It is found in the cell membrane. Its subcellular location is the cytoplasm. It carries out the reaction ATP + H2O + cellular proteinSide 1 = ADP + phosphate + cellular proteinSide 2.. Functionally, part of the Sec protein translocase complex. Interacts with the SecYEG preprotein conducting channel. Has a central role in coupling the hydrolysis of ATP to the transfer of proteins into and across the cell membrane, serving as an ATP-driven molecular motor driving the stepwise translocation of polypeptide chains across the membrane. The polypeptide is Protein translocase subunit SecA (Streptococcus gordonii (strain Challis / ATCC 35105 / BCRC 15272 / CH1 / DL1 / V288)).